Consider the following 23-residue polypeptide: Dahlein-4.1 (23 aa).

Expressed by the skin dorsal glands.

The protein resides in the secreted. In terms of biological role, has no antimicrobial activity. The protein is Dahlein-4.1 of Ranoidea dahlii (Dahl's aquatic frog).